The following is a 102-amino-acid chain: Protein PAPPAS (102 aa).

The next 2 helical transmembrane spans lie at 13 to 33 and 82 to 102; these read LFLT…FVKW and IGSD…FFFF.

As to expression, expressed in placenta with lower expression in brain, kidney and testis.

The protein localises to the endoplasmic reticulum membrane. In Homo sapiens (Human), this protein is Protein PAPPAS (PAPPA-AS1).